Consider the following 504-residue polypeptide: Glycine--tRNA ligase (504 aa).

Substrate contacts are provided by Arg-99 and Glu-189. ATP-binding positions include 221-223, 231-236, 306-307, and 365-368; these read RNE, FRVREL, EI, and GVDR. Residue 236 to 240 coordinates substrate; it reads LEQME. 361 to 365 provides a ligand contact to substrate; that stretch reads EPSAG.

It belongs to the class-II aminoacyl-tRNA synthetase family. In terms of assembly, homodimer.

It localises to the cytoplasm. The enzyme catalyses tRNA(Gly) + glycine + ATP = glycyl-tRNA(Gly) + AMP + diphosphate. Its function is as follows. Catalyzes the attachment of glycine to tRNA(Gly). The sequence is that of Glycine--tRNA ligase from Deinococcus geothermalis (strain DSM 11300 / CIP 105573 / AG-3a).